Consider the following 177-residue polypeptide: Large ribosomal subunit protein bL19 (177 aa).

Belongs to the bacterial ribosomal protein bL19 family.

Its function is as follows. This protein is located at the 30S-50S ribosomal subunit interface and may play a role in the structure and function of the aminoacyl-tRNA binding site. The protein is Large ribosomal subunit protein bL19 of Sinorhizobium medicae (strain WSM419) (Ensifer medicae).